Reading from the N-terminus, the 113-residue chain is Nucleoid-associated protein Synpcc7942_0464 (113 aa).

This sequence belongs to the YbaB/EbfC family. In terms of assembly, homodimer.

Its subcellular location is the cytoplasm. It localises to the nucleoid. Its function is as follows. Binds to DNA and alters its conformation. May be involved in regulation of gene expression, nucleoid organization and DNA protection. The protein is Nucleoid-associated protein Synpcc7942_0464 of Synechococcus elongatus (strain ATCC 33912 / PCC 7942 / FACHB-805) (Anacystis nidulans R2).